Reading from the N-terminus, the 427-residue chain is Ribitol transporter (427 aa).

Topologically, residues 1 to 7 (MSVNNKQ) are cytoplasmic. Residues 8–28 (WYGLPLNLIWGYVAIAVFMTG) traverse the membrane as a helical segment. At 29–51 (DGFELAFLSHYIKALGFTPAQAS) the chain is on the extracellular side. The helical transmembrane segment at 52–72 (FAFTLYGLAAALSAWVSGVVA) threads the bilayer. At 73–79 (EIITPRK) the chain is on the cytoplasmic side. The helical transmembrane segment at 80 to 100 (AMLIGFVLWCVFHVLFLVFGL) threads the bilayer. Topologically, residues 101-107 (GRANYAL) are extracellular. The helical transmembrane segment at 108 to 128 (ILLFYGIRGLAYPLFLYSFIV) threads the bilayer. The Cytoplasmic portion of the chain corresponds to 129–141 (AIIHNVRSDSSSS). The chain crosses the membrane as a helical span at residues 142 to 162 (ALGWFWAVYSVGIGVFGSYIP). Over 163–171 (SFTIPHIGE) the chain is Extracellular. A helical membrane pass occupies residues 172–192 (MGTLWLALLFCATGGIIALVS). Residues 193–238 (MRHTETPRHMQNLTTREKFAELGRAATLLYTNRSILFSSIVRIINT) lie on the Cytoplasmic side of the membrane. The helical transmembrane segment at 239-259 (LSLFGFAVIMPMMFVDELGFT) threads the bilayer. Over 260–263 (TSEW) the chain is Extracellular. A helical transmembrane segment spans residues 264-284 (LQVWAAFFFTTIFSNVFWGIV). Over 285–295 (AEKMGWMKVIR) the chain is Cytoplasmic. The chain crosses the membrane as a helical span at residues 296 to 316 (WFGCIGMALSSLAFYYLPQHF). Over 317–323 (GHNFAMA) the chain is Extracellular. A helical membrane pass occupies residues 324-344 (LVPAIALGIFVAAFVPMAAVF). At 345–360 (PALEPNHKGAAISVYN) the chain is on the cytoplasmic side. Residues 361–381 (LSAGLSNFLAPAIAVVLLPYF) traverse the membrane as a helical segment. Over 382–383 (ST) the chain is Extracellular. The helical transmembrane segment at 384 to 404 (IGVVIAYTALYILAFFLCPLI) threads the bilayer. Over 405–427 (RVEQPGFTSDQHAKPFTANAAES) the chain is Cytoplasmic.

This sequence belongs to the major facilitator superfamily. Sugar transporter (TC 2.A.1.1) family. CsbX subfamily.

Its subcellular location is the cell membrane. This Klebsiella pneumoniae protein is Ribitol transporter (rbtT).